The primary structure comprises 334 residues: Beta-hexosaminidase (334 aa).

Residues D60, R68, R133, and 163–164 (KH) each bind substrate. Catalysis depends on H176, which acts as the Proton donor/acceptor. Catalysis depends on D247, which acts as the Nucleophile.

It belongs to the glycosyl hydrolase 3 family. NagZ subfamily.

It is found in the cytoplasm. It catalyses the reaction Hydrolysis of terminal non-reducing N-acetyl-D-hexosamine residues in N-acetyl-beta-D-hexosaminides.. The protein operates within cell wall biogenesis; peptidoglycan recycling. In terms of biological role, plays a role in peptidoglycan recycling by cleaving the terminal beta-1,4-linked N-acetylglucosamine (GlcNAc) from peptide-linked peptidoglycan fragments, giving rise to free GlcNAc, anhydro-N-acetylmuramic acid and anhydro-N-acetylmuramic acid-linked peptides. This chain is Beta-hexosaminidase, found in Xanthomonas oryzae pv. oryzae (strain MAFF 311018).